The following is a 158-amino-acid chain: NAD(P)H-quinone oxidoreductase subunit J, chloroplastic (158 aa).

Belongs to the complex I 30 kDa subunit family. As to quaternary structure, NDH is composed of at least 16 different subunits, 5 of which are encoded in the nucleus.

It localises to the plastid. The protein resides in the chloroplast thylakoid membrane. It carries out the reaction a plastoquinone + NADH + (n+1) H(+)(in) = a plastoquinol + NAD(+) + n H(+)(out). The catalysed reaction is a plastoquinone + NADPH + (n+1) H(+)(in) = a plastoquinol + NADP(+) + n H(+)(out). NDH shuttles electrons from NAD(P)H:plastoquinone, via FMN and iron-sulfur (Fe-S) centers, to quinones in the photosynthetic chain and possibly in a chloroplast respiratory chain. The immediate electron acceptor for the enzyme in this species is believed to be plastoquinone. Couples the redox reaction to proton translocation, and thus conserves the redox energy in a proton gradient. The protein is NAD(P)H-quinone oxidoreductase subunit J, chloroplastic of Olimarabidopsis pumila (Dwarf rocket).